We begin with the raw amino-acid sequence, 326 residues long: Acetyl-coenzyme A carboxylase carboxyl transferase subunit beta (326 aa).

Residues 32-301 (LWTKCPACGV…ILPPLNADSN (270 aa)) form the CoA carboxyltransferase N-terminal domain. C36, C39, C55, and C58 together coordinate Zn(2+). Residues 36–58 (CPACGVLTYTKDLQGNWMVCVEC) form a C4-type zinc finger.

Belongs to the AccD/PCCB family. As to quaternary structure, acetyl-CoA carboxylase is a heterohexamer composed of biotin carboxyl carrier protein (AccB), biotin carboxylase (AccC) and two subunits each of ACCase subunit alpha (AccA) and ACCase subunit beta (AccD). It depends on Zn(2+) as a cofactor.

It is found in the cytoplasm. The enzyme catalyses N(6)-carboxybiotinyl-L-lysyl-[protein] + acetyl-CoA = N(6)-biotinyl-L-lysyl-[protein] + malonyl-CoA. It functions in the pathway lipid metabolism; malonyl-CoA biosynthesis; malonyl-CoA from acetyl-CoA: step 1/1. Functionally, component of the acetyl coenzyme A carboxylase (ACC) complex. Biotin carboxylase (BC) catalyzes the carboxylation of biotin on its carrier protein (BCCP) and then the CO(2) group is transferred by the transcarboxylase to acetyl-CoA to form malonyl-CoA. The chain is Acetyl-coenzyme A carboxylase carboxyl transferase subunit beta from Synechocystis sp. (strain ATCC 27184 / PCC 6803 / Kazusa).